Here is an 810-residue protein sequence, read N- to C-terminus: RING finger protein unkempt homolog (810 aa).

The interval 1-24 is disordered; the sequence is MSKGPGPGGSAASSAPPAATAQVL. The segment covering 10–19 has biased composition (low complexity); sequence SAASSAPPAA. 5 consecutive C3H1-type zinc fingers follow at residues 84 to 113, 124 to 154, 215 to 241, 251 to 285, and 293 to 321; these read YSPD…HRTT, YYKT…HGPH, NYKT…HNSK, KYRS…HTRT, and IYKS…HIEP. Residues 239-265 are disordered; sequence NSKDRRRSPRKHKYRSSPCPNVKHGDE. Ser-240 is modified (phosphoserine). A compositionally biased stretch (basic residues) spans 241 to 253; sequence KDRRRSPRKHKYR. A phosphoserine mark is found at Ser-374, Ser-378, Ser-385, and Ser-394. The interval 478-497 is disordered; sequence TSSLAATPPSPAGTNSTPGM. Position 631 is a phosphoserine (Ser-631). A coiled-coil region spans residues 643–727; that stretch reads GAAELARLRQ…ERLHTVPEAQ (85 aa). The segment at 766–801 adopts an RING-type; degenerate zinc-finger fold; sequence SVKCLKCQEQTRAVLPCQHAVLCELCAEGSECPVCQ.

Belongs to the unkempt family.

It localises to the cytoplasm. Sequence-specific RNA-binding protein which plays an important role in the establishment and maintenance of the early morphology of cortical neurons during embryonic development. Acts as a translation repressor and controls a translationally regulated cell morphology program to ensure proper structuring of the nervous system. Translational control depends on recognition of its binding element within target mRNAs which consists of a mandatory UAG trimer upstream of a U/A-rich motif. Associated with polysomes. In Mus musculus (Mouse), this protein is RING finger protein unkempt homolog (Unk).